Reading from the N-terminus, the 303-residue chain is GTPase Era (303 aa).

The 168-residue stretch at 7–174 (KSGFVAILGR…IDTLSEKLDE (168 aa)) folds into the Era-type G domain. The segment at 15–22 (GRPNVGKS) is G1. 15–22 (GRPNVGKS) lines the GTP pocket. The interval 41 to 45 (QTTRN) is G2. Positions 62–65 (DTPG) are G3. GTP is bound by residues 62–66 (DTPGI) and 124–127 (NKID). Positions 124-127 (NKID) are G4. The tract at residues 153–155 (ISA) is G5. The KH type-2 domain maps to 205 to 283 (TREEVPHSIA…YLETWVKIKN (79 aa)).

This sequence belongs to the TRAFAC class TrmE-Era-EngA-EngB-Septin-like GTPase superfamily. Era GTPase family. In terms of assembly, monomer.

Its subcellular location is the cytoplasm. It is found in the cell membrane. Its function is as follows. An essential GTPase that binds both GDP and GTP, with rapid nucleotide exchange. Plays a role in 16S rRNA processing and 30S ribosomal subunit biogenesis and possibly also in cell cycle regulation and energy metabolism. The polypeptide is GTPase Era (Lactococcus lactis subsp. lactis (strain IL1403) (Streptococcus lactis)).